The following is a 96-amino-acid chain: Co-chaperonin GroES (96 aa).

The protein belongs to the GroES chaperonin family. Heptamer of 7 subunits arranged in a ring. Interacts with the chaperonin GroEL.

Its subcellular location is the cytoplasm. Functionally, together with the chaperonin GroEL, plays an essential role in assisting protein folding. The GroEL-GroES system forms a nano-cage that allows encapsulation of the non-native substrate proteins and provides a physical environment optimized to promote and accelerate protein folding. GroES binds to the apical surface of the GroEL ring, thereby capping the opening of the GroEL channel. The chain is Co-chaperonin GroES from Wolbachia pipientis wMel.